Consider the following 397-residue polypeptide: MNWHFPFFILTTVTLSSVYSQLNSLSLEELGSDTGIQVFNQIIKSQPHENVVISPHGIASILGMLQLGADGRTKKQLSTVMRYNVNGVGKVLKKINKAIVSKKNKDIVTVANAVFVRNGFKVEVPFAARNKEVFQCEVQSVNFQDPASACDAINFWVKNETRGMIDNLLSPNLIDSALTKLVLVNAVYFKGLWKSRFQPENTKKRTFVAGDGKSYQVPMLAQLSVFRSGSTKTPNGLWYNFIELPYHGESISMLIALPTESSTPLSAIIPHISTKTINSWMNTMVPKRMQLVLPKFTALAQTDLKEPLKALGITEMFEPSKANFAKITRSESLHVSHILQKAKIEVSEDGTKAAVVTTAILIARSSPPWFIVDRPFLFCIRHNPTGAILFLGQVNKP.

An N-terminal signal peptide occupies residues 1 to 19 (MNWHFPFFILTTVTLSSVY). Residue N159 is glycosylated (N-linked (GlcNAc...) asparagine).

Belongs to the serpin family.

It is found in the secreted. It localises to the extracellular space. Serine protease inhibitor with activity toward thrombin, trypsin, and urokinase. Promotes neurite extension by inhibiting thrombin. Binds heparin. The polypeptide is Glia-derived nexin (Serpine2) (Rattus norvegicus (Rat)).